The primary structure comprises 139 residues: NADPH-dependent 7-cyano-7-deazaguanine reductase (139 aa).

Cysteine 34 (thioimide intermediate) is an active-site residue. Aspartate 41 acts as the Proton donor in catalysis. Substrate is bound by residues 56-58 (VEL) and 75-76 (HE).

This sequence belongs to the GTP cyclohydrolase I family. QueF type 1 subfamily.

It localises to the cytoplasm. The catalysed reaction is 7-aminomethyl-7-carbaguanine + 2 NADP(+) = 7-cyano-7-deazaguanine + 2 NADPH + 3 H(+). It functions in the pathway tRNA modification; tRNA-queuosine biosynthesis. In terms of biological role, catalyzes the NADPH-dependent reduction of 7-cyano-7-deazaguanine (preQ0) to 7-aminomethyl-7-deazaguanine (preQ1). This Thiobacillus denitrificans (strain ATCC 25259 / T1) protein is NADPH-dependent 7-cyano-7-deazaguanine reductase.